The chain runs to 224 residues: UPF0758 protein VF_0126 (224 aa).

The 123-residue stretch at 102 to 224 folds into the MPN domain; the sequence is ALTSPEHTKR…IVSFAERGWI (123 aa). Histidine 173, histidine 175, and aspartate 186 together coordinate Zn(2+). Residues 173–186 carry the JAMM motif motif; that stretch reads HNHPSGVAEPSQAD.

Belongs to the UPF0758 family.

The protein is UPF0758 protein VF_0126 of Aliivibrio fischeri (strain ATCC 700601 / ES114) (Vibrio fischeri).